Consider the following 564-residue polypeptide: Proline--tRNA ligase (564 aa).

This sequence belongs to the class-II aminoacyl-tRNA synthetase family. ProS type 1 subfamily. Homodimer.

The protein localises to the cytoplasm. It carries out the reaction tRNA(Pro) + L-proline + ATP = L-prolyl-tRNA(Pro) + AMP + diphosphate. Functionally, catalyzes the attachment of proline to tRNA(Pro) in a two-step reaction: proline is first activated by ATP to form Pro-AMP and then transferred to the acceptor end of tRNA(Pro). As ProRS can inadvertently accommodate and process non-cognate amino acids such as alanine and cysteine, to avoid such errors it has two additional distinct editing activities against alanine. One activity is designated as 'pretransfer' editing and involves the tRNA(Pro)-independent hydrolysis of activated Ala-AMP. The other activity is designated 'posttransfer' editing and involves deacylation of mischarged Ala-tRNA(Pro). The misacylated Cys-tRNA(Pro) is not edited by ProRS. The polypeptide is Proline--tRNA ligase (Xanthomonas axonopodis pv. citri (strain 306)).